The following is an 87-amino-acid chain: Kawaguchipeptin peptide (87 aa).

The propeptide occupies 1 to 33 (MKNPTLLPKLTAPVERPAVTSSDLKQASSVDAA). Trp34 is lipidated: 3'-prenyl-2',N2-cyclotryptophan; partial. Positions 34-44 (WLNGDNNWSTP) form a cross-link, cyclopeptide (Trp-Pro). Leu35 carries the post-translational modification D-leucine; partial. Residue Trp41 is the site of 3'-prenyl-2',N2-cyclotryptophan; partial attachment. Residues 45–51 (FAGVNAA) constitute a propeptide that is removed on maturation. Residue Trp52 is the site of 3'-prenyl-2',N2-cyclotryptophan; partial attachment. Residues 52-62 (WLNGDNNWSTP) constitute a cross-link (cyclopeptide (Trp-Pro)). Leu53 bears the D-leucine; partial mark. Trp59 carries the 3'-prenyl-2',N2-cyclotryptophan; partial lipid modification. Residues 63 to 69 (FAGVNAA) constitute a propeptide that is removed on maturation. Trp70 carries the 3'-prenyl-2',N2-cyclotryptophan; partial lipid modification. The cyclopeptide (Trp-Pro) cross-link spans 70–80 (WLNGDNNWSTP). D-leucine; partial is present on Leu71. Residue Trp77 is the site of 3'-prenyl-2',N2-cyclotryptophan; partial attachment. A propeptide spanning residues 81-87 (FAADGAE) is cleaved from the precursor.

In terms of processing, kawaguchipeptin A contains a D-Leu and 2 prenylated Trp, whereas kawaguchipeptin B only contains unmodified amino acids. Post-translationally, kawaguchipeptin A is prenylated in vivo. Upon expression in E.coli of the whole operon, Trp residues are prenylated by C-prenyltransferase KgpF. Prenylation by KgpF is likely the last enzymatic step in the biosynthetic maturation of kawaguchipeptin A.

Its function is as follows. Both kawaguchipeptin A and B, which only differ by post-translational modifications, have antibacterial activities, since they inhibit the growth of the Gram-positive bacterium S.aureus at a concentration of 1 ug/mL. The chain is Kawaguchipeptin peptide from Microcystis aeruginosa (strain NIES-88 / KW-MA1-3).